We begin with the raw amino-acid sequence, 143 residues long: uncharacterized protein (143 aa).

A helical membrane pass occupies residues leucine 65 to valine 85.

Its subcellular location is the membrane. This is an uncharacterized protein from Saccharomyces cerevisiae (strain ATCC 204508 / S288c) (Baker's yeast).